The following is a 79-amino-acid chain: Conotoxin 1 (79 aa).

Positions 1–22 are cleaved as a signal peptide; that stretch reads MKLTCVLIITVLFLTASQLITA. The propeptide occupies 23 to 46; sequence DYSRDQRQYRAVRLGDEMRTFKGA. Disulfide bonds link Cys-49/Cys-62, Cys-56/Cys-67, and Cys-61/Cys-77.

Belongs to the conotoxin O1 superfamily. As to expression, expressed by the venom duct.

The protein localises to the secreted. In Conus vexillum (Flag cone), this protein is Conotoxin 1.